The primary structure comprises 145 residues: Lipoprotein signal peptidase (145 aa).

The next 3 helical transmembrane spans lie at Met-1 to Met-21, Tyr-57 to Thr-77, and Gly-79 to Ile-99. Residues Asp-109 and Asp-123 contribute to the active site. A helical membrane pass occupies residues Ile-115–Leu-135.

It belongs to the peptidase A8 family.

The protein resides in the cell inner membrane. The catalysed reaction is Release of signal peptides from bacterial membrane prolipoproteins. Hydrolyzes -Xaa-Yaa-Zaa-|-(S,diacylglyceryl)Cys-, in which Xaa is hydrophobic (preferably Leu), and Yaa (Ala or Ser) and Zaa (Gly or Ala) have small, neutral side chains.. The protein operates within protein modification; lipoprotein biosynthesis (signal peptide cleavage). Its function is as follows. This protein specifically catalyzes the removal of signal peptides from prolipoproteins. The polypeptide is Lipoprotein signal peptidase (Halothermothrix orenii (strain H 168 / OCM 544 / DSM 9562)).